We begin with the raw amino-acid sequence, 273 residues long: Probable membrane transporter protein YunE (273 aa).

Transmembrane regions (helical) follow at residues 3–23 (FVIL…IGLG), 50–70 (AIGT…LAYI), 81–101 (LIFF…SKLF), 105–125 (SFSV…MLKA), 157–177 (VGIA…IGGG), 185–205 (MLLF…IIFL), 222–242 (WLYA…GAAI), and 251–271 (IVMI…YEGI).

The protein belongs to the 4-toluene sulfonate uptake permease (TSUP) (TC 2.A.102) family.

Its subcellular location is the cell membrane. This Bacillus subtilis (strain 168) protein is Probable membrane transporter protein YunE (yunE).